The chain runs to 1407 residues: DNA-directed RNA polymerase subunit beta' (1407 aa).

Cys70, Cys72, Cys85, and Cys88 together coordinate Zn(2+). 3 residues coordinate Mg(2+): Asp460, Asp462, and Asp464. Zn(2+) is bound by residues Cys814, Cys888, Cys895, and Cys898.

The protein belongs to the RNA polymerase beta' chain family. In terms of assembly, the RNAP catalytic core consists of 2 alpha, 1 beta, 1 beta' and 1 omega subunit. When a sigma factor is associated with the core the holoenzyme is formed, which can initiate transcription. It depends on Mg(2+) as a cofactor. Zn(2+) serves as cofactor.

The catalysed reaction is RNA(n) + a ribonucleoside 5'-triphosphate = RNA(n+1) + diphosphate. In terms of biological role, DNA-dependent RNA polymerase catalyzes the transcription of DNA into RNA using the four ribonucleoside triphosphates as substrates. The polypeptide is DNA-directed RNA polymerase subunit beta' (Salmonella paratyphi A (strain ATCC 9150 / SARB42)).